Consider the following 291-residue polypeptide: Phosphatidylglycerol--prolipoprotein diacylglyceryl transferase (291 aa).

7 helical membrane passes run 21–41 (VALHWYGLMYLVGFVFAMWLA), 60–80 (LLYAGFLGVFLGGRIGYVLFY), 96–116 (WDGGMSFHGGLIGVILVMIIF), 130–150 (FIAPLIPFGLGAGRLGNFING), 198–218 (SQLYELALEGVVLFIILNLFI), 225–245 (GAVSGLFLIGYGAFRIIVEFF), and 260–280 (ISMGQILSIPMIIAGAIMMVW). Arg143 provides a ligand contact to a 1,2-diacyl-sn-glycero-3-phospho-(1'-sn-glycerol).

This sequence belongs to the Lgt family.

The protein localises to the cell inner membrane. The enzyme catalyses L-cysteinyl-[prolipoprotein] + a 1,2-diacyl-sn-glycero-3-phospho-(1'-sn-glycerol) = an S-1,2-diacyl-sn-glyceryl-L-cysteinyl-[prolipoprotein] + sn-glycerol 1-phosphate + H(+). Its pathway is protein modification; lipoprotein biosynthesis (diacylglyceryl transfer). Catalyzes the transfer of the diacylglyceryl group from phosphatidylglycerol to the sulfhydryl group of the N-terminal cysteine of a prolipoprotein, the first step in the formation of mature lipoproteins. In Salmonella newport (strain SL254), this protein is Phosphatidylglycerol--prolipoprotein diacylglyceryl transferase.